The chain runs to 412 residues: MHISRLALDHYRSWSQVVVDFVPGVNILFGKNGLGKTNLVEAVEVLSTGSSHRTSSTLPLIERGQTTATIRANVADDAGQTTTYEASIHARGANRARINSGSSLYLRDIIGKIPSVSFTPEDQRLVSGDPGARRTMMNQAAALLEPGYMQTLQQFTRIAKQRATLLKQLNANANNGQPMDAVLSGLEIWTGQFIEAGVVLTRMRAHVISLLAEPFAAIYADLAGAGEQVTLTYAPSFDEVLMFNDPHPQISEHFQRIYPGEVARGVNLIGPQRDDMNLDLAGIPAREFASNGEMWTMALALKMALFEIVRDRLGLQPIVILDDVFAQLDDSRRAQILDFARKQDQVLITVAAEGDVPDYESAHRIDVAALAEPASVILPTLGNLSDLRENESLGKYDGKTAVDSASVERKVS.

Residue 30-37 coordinates ATP; it reads GKNGLGKT.

The protein belongs to the RecF family.

It localises to the cytoplasm. Functionally, the RecF protein is involved in DNA metabolism; it is required for DNA replication and normal SOS inducibility. RecF binds preferentially to single-stranded, linear DNA. It also seems to bind ATP. This is DNA replication and repair protein RecF from Bifidobacterium longum subsp. infantis (strain ATCC 15697 / DSM 20088 / JCM 1222 / NCTC 11817 / S12).